The following is a 388-amino-acid chain: MRVLAAIALGATGLRGALAAVVPQEVLGTNPHIHHEQEKYLIELAPYQTRWVTEEEKWALKLDGVNFIDITEEHNTGFYPTLNSASYVKYPLKMQYADEVVALNKNLSTANMKANLEHFTSFHTRYYKSQTGIESATWLASQVEKVITESGAANHGATVERFAHPWGQFSIIARIPGQTNKTVVLGAHQDSINLFLPSILAAPGADDDGSGTVTILEALRGLLQSGSVAQGNATNTIEFHWYSAEEGGMLGSQAVFSSYKKNRREVKAMLQQDMTGYTKGALDAGAKEAVGIMIDYVDQGLTRFVKEIVTTYCSLGYVETKCGYACSDHTSASKYGYPAAMATESEMENTNRKIHTTDDQIKYLSFDHMLEHAKLTLGFAYELAFAPF.

Residues 1–19 (MRVLAAIALGATGLRGALA) form the signal peptide. The propeptide occupies 20 to 88 (AVVPQEVLGT…YPTLNSASYV (69 aa)). N-linked (GlcNAc...) asparagine glycans are attached at residues N106 and N180. Positions 188 and 207 each coordinate Zn(2+). The N-linked (GlcNAc...) asparagine glycan is linked to N232. Zn(2+)-binding residues include E246 and D273. C322 and C326 form a disulfide bridge. H355 is a binding site for Zn(2+).

Belongs to the peptidase M28 family. M28E subfamily. In terms of assembly, monomer. Zn(2+) is required as a cofactor.

It localises to the secreted. Functionally, extracellular aminopeptidase that allows assimilation of proteinaceous substrates. The sequence is that of Leucine aminopeptidase 1 (lap1) from Aspergillus clavatus (strain ATCC 1007 / CBS 513.65 / DSM 816 / NCTC 3887 / NRRL 1 / QM 1276 / 107).